Here is a 195-residue protein sequence, read N- to C-terminus: Nucleoside triphosphate pyrophosphatase (195 aa).

The active-site Proton acceptor is the aspartate 76.

It belongs to the Maf family. It depends on a divalent metal cation as a cofactor.

It localises to the cytoplasm. It catalyses the reaction a ribonucleoside 5'-triphosphate + H2O = a ribonucleoside 5'-phosphate + diphosphate + H(+). The enzyme catalyses a 2'-deoxyribonucleoside 5'-triphosphate + H2O = a 2'-deoxyribonucleoside 5'-phosphate + diphosphate + H(+). In terms of biological role, nucleoside triphosphate pyrophosphatase. May have a dual role in cell division arrest and in preventing the incorporation of modified nucleotides into cellular nucleic acids. The polypeptide is Nucleoside triphosphate pyrophosphatase (Pelagibacter ubique (strain HTCC1062)).